Reading from the N-terminus, the 241-residue chain is ATP synthase subunit a (241 aa).

5 helical membrane-spanning segments follow: residues 30–50 (GQVFLTSWIVIGAILALVVVG), 91–111 (FIGTLFLFIFVSNWGGSLVPW), 128–148 (INTTVALALLVSLSYFYAGLS), 193–213 (LVVAVLVFLVPLFLPVPVMFL), and 214–234 (GLFTSAIQALIFATLAAYYIG).

Belongs to the ATPase A chain family. In terms of assembly, F-type ATPases have 2 components, CF(1) - the catalytic core - and CF(0) - the membrane proton channel. CF(1) has five subunits: alpha(3), beta(3), gamma(1), delta(1), epsilon(1). CF(0) has four main subunits: a, b, b' and c.

It is found in the cellular thylakoid membrane. Key component of the proton channel; it plays a direct role in the translocation of protons across the membrane. This chain is ATP synthase subunit a, found in Prochlorococcus marinus (strain MIT 9303).